Here is a 203-residue protein sequence, read N- to C-terminus: Outer-membrane lipoprotein carrier protein (203 aa).

The signal sequence occupies residues 1-21 (MKKLAITCALLSGMVVSQVWA). A disordered region spans residues 184-203 (DASKFTFTPPKGVTVDDQRK).

It belongs to the LolA family. Monomer.

The protein localises to the periplasm. Its function is as follows. Participates in the translocation of lipoproteins from the inner membrane to the outer membrane. Only forms a complex with a lipoprotein if the residue after the N-terminal Cys is not an aspartate (The Asp acts as a targeting signal to indicate that the lipoprotein should stay in the inner membrane). This is Outer-membrane lipoprotein carrier protein from Klebsiella pneumoniae (strain 342).